Reading from the N-terminus, the 301-residue chain is Ornithine carbamoyltransferase (301 aa).

Carbamoyl phosphate contacts are provided by residues 47 to 50 (STRT), Gln-74, Arg-98, and 125 to 128 (HPMQ). Residues Asn-156, Asp-220, and 224 to 225 (SM) contribute to the L-ornithine site. Carbamoyl phosphate-binding positions include 260-261 (CL) and Arg-288.

This sequence belongs to the aspartate/ornithine carbamoyltransferase superfamily. OTCase family.

It localises to the cytoplasm. It carries out the reaction carbamoyl phosphate + L-ornithine = L-citrulline + phosphate + H(+). It participates in amino-acid biosynthesis; L-arginine biosynthesis; L-arginine from L-ornithine and carbamoyl phosphate: step 1/3. Functionally, reversibly catalyzes the transfer of the carbamoyl group from carbamoyl phosphate (CP) to the N(epsilon) atom of ornithine (ORN) to produce L-citrulline. The sequence is that of Ornithine carbamoyltransferase from Picrophilus torridus (strain ATCC 700027 / DSM 9790 / JCM 10055 / NBRC 100828 / KAW 2/3).